The chain runs to 278 residues: Large ribosomal subunit protein uL2 (278 aa).

2 disordered regions span residues 29 to 55 (PEKS…RHQG) and 225 to 278 (VMNP…NKKR). A compositionally biased stretch (basic residues) spans 258 to 278 (RSNKKASNKYIVRRRTKNKKR).

The protein belongs to the universal ribosomal protein uL2 family. Part of the 50S ribosomal subunit. Forms a bridge to the 30S subunit in the 70S ribosome. In terms of processing, the N-terminus is blocked. Post-translationally, phosphorylated on serine and threonine residues.

Its function is as follows. One of the primary rRNA binding proteins. Required for association of the 30S and 50S subunits to form the 70S ribosome, for tRNA binding and peptide bond formation. It has been suggested to have peptidyltransferase activity; this is somewhat controversial. Makes several contacts with the 16S rRNA in the 70S ribosome. The protein is Large ribosomal subunit protein uL2 of Streptomyces collinus.